The chain runs to 310 residues: Olfactory receptor 2A14 (310 aa).

At 1 to 24 the chain is on the extracellular side; sequence MEGNKTWITDITLPRFQVGPALEI. The N-linked (GlcNAc...) asparagine glycan is linked to N4. A helical transmembrane segment spans residues 25–48; sequence LLCGLFSAFYTLTLLGNGVIFGII. The Cytoplasmic segment spans residues 49–56; the sequence is CLDCKLHT. Residues 57-78 form a helical membrane-spanning segment; it reads PMYFFLSHLAIVDISYASNYVP. At 79–99 the chain is on the extracellular side; sequence KMLTNLMNQESTISFFPCIMQ. C96 and C188 are oxidised to a cystine. The chain crosses the membrane as a helical span at residues 100-119; that stretch reads TFLYLAFAHVECLILVVMSY. At 120–138 the chain is on the cytoplasmic side; sequence DRYADICHPLRYNSLMSWR. A helical membrane pass occupies residues 139 to 157; the sequence is VCTVLAVASWVFSFLLALV. At 158–194 the chain is on the extracellular side; sequence PLVLILSLPFCGPHEINHFFCEILSVLKLACADTWLN. Residues 195-218 form a helical membrane-spanning segment; it reads QVVIFAACVFILVGPLCLVLVSYL. Topologically, residues 219–235 are cytoplasmic; sequence RILAAILRIQSGEGRRK. A helical transmembrane segment spans residues 236–258; it reads AFSTCSSHLCVVGLFFGSAIVTY. The Extracellular segment spans residues 259-271; that stretch reads MAPKSRHPEEQQK. The helical transmembrane segment at 272–291 threads the bilayer; the sequence is VLSLFYSLFNPMLNPLIYSL. The Cytoplasmic portion of the chain corresponds to 292-310; sequence RNAEVKGALRRALRKERLT.

It belongs to the G-protein coupled receptor 1 family.

Its subcellular location is the cell membrane. Odorant receptor. This is Olfactory receptor 2A14 (OR2A14) from Homo sapiens (Human).